Here is a 667-residue protein sequence, read N- to C-terminus: Protein angel homolog 1 (667 aa).

2 positions are modified to phosphoserine: S77 and S105.

It belongs to the CCR4/nocturin family.

The polypeptide is Protein angel homolog 1 (Rattus norvegicus (Rat)).